A 198-amino-acid polypeptide reads, in one-letter code: MSLSIDVTSLPSFSSSIYKNESSATASTLSGKSIGRSVQYVSPDAEAFSKYMLSKSPEDIGPSDSASNDPLTSFSIRSNAVKTNADAGVSMDSSVQSRPSINVGCDQVDFSFNKGIKVNANLDSSISVSTNSRKEKSKGDRKSRKHYPKIEAESDSDEYVLDDSDSDDGKCRNCKYKRKYFALRMRMKQVAMQLIEDL.

Position 67 is a phosphoserine; by host CK1 (S67). Residue D92 participates in Mg(2+) binding. A disordered region spans residues 127-167; sequence SVSTNSRKEKSKGDRKSRKHYPKIEAESDSDEYVLDDSDSD. Acidic residues predominate over residues 153 to 166; the sequence is ESDSDEYVLDDSDS. Phosphoserine; by host is present on residues S154, S156, S164, and S166.

The protein belongs to the rotavirus NSP5 family. Homodimer. Interacts with VP1. Interacts with VP2. Interacts with NSP2; this interaction leads to up-regulation of NSP5 hyperphosphorylation and formation of virus factories. Interacts with NSP6. Participates in the selective exclusion of host proteins from stress granules (SG) and P bodies (PB). Also participates in the sequestration of these remodeled organelles in viral factories. Requires Mg(2+) as cofactor. In terms of processing, O-glycosylated. Post-translationally, hyperphosphorylated on serine residues, when in dimeric form. Phosphorylation by host CK1 is required for the hyperphosphorylation of NSP5 dimer.

Its subcellular location is the host cytoplasm. Functionally, plays an essential role in the viral genome replication. Participates, together with NSP2, in the formation of viral factories (viroplasms), which are large inclusions in the host cytoplasm where replication intermediates are assembled and viral RNA replication takes place. Orchestrates the recruitment of viroplasmic proteins such as capsid proteins to these factories. Participates in the selective exclusion of host proteins from stress granules (SG) and P bodies (PB). Also participates in the sequestration of these remodeled organelles in viral factories. This chain is Non-structural protein 5, found in Bos taurus (Bovine).